The primary structure comprises 706 residues: K(+)-insensitive pyrophosphate-energized proton pump (706 aa).

A run of 5 helical transmembrane segments spans residues 1 to 21, 62 to 82, 83 to 103, 129 to 149, and 164 to 184; these read MTALWVIVLCGALSIVYAIWA, VVIFALLAYFLGILVAIGFAI, GAILSGAAGFIGMNVSVRANV, LLVAGLALLGVTLYFIYLIHF, and VALGFGASLISIFARLGGGIF. Lys-186 is a substrate binding site. Residues Asp-189, Asp-193, Asn-216, and Asp-219 each coordinate Mg(2+). A run of 6 helical transmembrane segments spans residues 231–251, 263–283, 300–320, 330–350, 393–413, and 414–434; these read LFETYAVTAVATMVLAAIFFG, TLPLAIGGICILTSIAGTFFV, IATGVLSLVGVGVVIHQLIGF, GLALFECGIVGLAVTGLIIWI, IVIIAGILITYSLAGLFGIAI, and ATTTMLALAGMIVALDAFGPV. Residue Asp-436 coordinates Mg(2+). A run of 4 helical transmembrane segments spans residues 467–487, 516–536, 585–605, and 616–636; these read AVTKGYAIGSAGLGALVLFAA, YVVVGLLFGGLLPYLFGAMGM, IIPSLLPVLSPIFVYFAIYAI, and AFSAVGAMLLGVIVTGLFVAI. Ca(2+) contacts are provided by Asp-646, Asp-672, and Asp-676. Lys-679 contacts substrate. Residues 685–705 form a helical membrane-spanning segment; that stretch reads AVNPMIKITNIVALLLLAILA.

This sequence belongs to the H(+)-translocating pyrophosphatase (TC 3.A.10) family. K(+)-insensitive subfamily. In terms of assembly, homodimer. Mg(2+) serves as cofactor.

It is found in the cell inner membrane. It carries out the reaction diphosphate + H2O + H(+)(in) = 2 phosphate + 2 H(+)(out). Functionally, proton pump that utilizes the energy of pyrophosphate hydrolysis as the driving force for proton movement across the membrane. Generates a proton motive force. This Rhodopseudomonas palustris (strain ATCC BAA-98 / CGA009) protein is K(+)-insensitive pyrophosphate-energized proton pump.